The sequence spans 612 residues: Pentatricopeptide repeat-containing protein At4g14050, mitochondrial (612 aa).

A mitochondrion-targeting transit peptide spans Met-1–Ala-24. PPR repeat units follow at residues Cys-37–Ala-71, Trp-72–Pro-103, Asp-104–Asn-138, Asp-139–Lys-169, Asn-170–Ser-204, Trp-205–Ile-235, Asp-237–Ser-271, Cys-272–Arg-302, Asp-303–Pro-337, Asn-338–Pro-373, and Ser-374–Pro-408. The tract at residues Thr-409–Arg-485 is type E motif. The type E(+) motif stretch occupies residues Lys-486–Arg-516. The tract at residues Arg-518 to Trp-612 is type DYW motif.

This sequence belongs to the PPR family. PCMP-H subfamily. In terms of assembly, interacts with MORF8/RIP1 and MORF1/RIP8.

The protein resides in the mitochondrion. Involved in C-to-U editing of mitochondrial RNA. Required specifically for editing the mitochondrial NAD4, MT-CYB/COB and RPL16 transcripts. The protein is Pentatricopeptide repeat-containing protein At4g14050, mitochondrial (PCMP-H13) of Arabidopsis thaliana (Mouse-ear cress).